We begin with the raw amino-acid sequence, 227 residues long: Protein MobD (227 aa).

The polypeptide is Protein MobD (mobD) (Acidithiobacillus ferrooxidans (Thiobacillus ferrooxidans)).